Here is a 160-residue protein sequence, read N- to C-terminus: uncharacterized protein (160 aa).

The chain crosses the membrane as a helical span at residues 27–47 (VMNSYFIAGCGPAVCYYAVSW).

The protein resides in the membrane. This is an uncharacterized protein from Homo sapiens (Human).